A 455-amino-acid chain; its full sequence is Nuclear distribution protein nudF (455 aa).

Residues 9–41 (QAEELHKSMIAYLVASDLPDTAAALRREVNLSE) form the LisH domain. The stretch at 61–88 (TSIARLQKKIMDLESRNATLQSELDNST) forms a coiled coil. WD repeat units follow at residues 113 to 154 (SHRD…RTLK), 156 to 196 (HTRA…KNIR), 200 to 239 (GHDHIVSAVRFIPSRNLLVSASRDNDMRIWDVTTGYCVKT), 242 to 281 (GHTDWVRDVSISFDGRFLFSTGQDMTARLWDISTVSNIEH), 287 to 347 (GHEN…LMTL), 349 to 388 (GHDSWVQALVFHPGGKYLLSVSDDKTLRCWDLNQQGKCVK), 392 to 438 (AHES…IQMR), and 440 to 455 (VVATGGWDQKLKIFAG). A disordered region spans residues 408–431 (KNVPGGDGAAEGEGNDKNGAGSEN).

It belongs to the WD repeat LIS1/nudF family. Self-associates. Interacts with nudE and dynein.

It localises to the cytoplasm. The protein localises to the cytoskeleton. It is found in the spindle pole. In terms of biological role, positively regulates the activity of the minus-end directed microtubule motor protein dynein. May enhance dynein-mediated microtubule sliding by targeting dynein to the microtubule plus end. Required for nuclear migration during vegetative growth as well as development. Required for retrograde early endosome (EE) transport from the hyphal tip. Required for localization of dynein to the mitotic spindle poles. Recruits additional proteins to the dynein complex at SPBs. The chain is Nuclear distribution protein nudF from Aspergillus flavus (strain ATCC 200026 / FGSC A1120 / IAM 13836 / NRRL 3357 / JCM 12722 / SRRC 167).